The primary structure comprises 311 residues: Cbb3-type cytochrome c oxidase subunit CcoP1 (311 aa).

Transmembrane regions (helical) follow at residues 4 to 24 (FWSGYIALLTLGTIVALFWLI) and 56 to 76 (RWWFLLFIGTLVFGILYLVLY). Cytochrome c domains are found at residues 130–209 (QAVK…RKDL) and 220–302 (ADLS…YSLS). Residues cysteine 143, cysteine 146, histidine 147, methionine 186, cysteine 233, cysteine 236, histidine 237, and methionine 279 each contribute to the heme c site.

It belongs to the CcoP / FixP family. In terms of assembly, component of the cbb3-type cytochrome c oxidase at least composed of CcoN, CcoO, CcoQ and CcoP. Requires heme c as cofactor.

The protein localises to the cell inner membrane. Its pathway is energy metabolism; oxidative phosphorylation. C-type cytochrome. Part of the cbb3-type cytochrome c oxidase complex. CcoP subunit is required for transferring electrons from donor cytochrome c via its heme groups to CcoO subunit. From there, electrons are shuttled to the catalytic binuclear center of CcoN subunit where oxygen reduction takes place. The complex also functions as a proton pump. The protein is Cbb3-type cytochrome c oxidase subunit CcoP1 of Stutzerimonas stutzeri (Pseudomonas stutzeri).